Reading from the N-terminus, the 231-residue chain is Two-component response regulator ARR3 (231 aa).

Positions 34–161 (HVLAVDDSLV…DVKRLRSYLT (128 aa)) constitute a Response regulatory domain. A 4-aspartylphosphate modification is found at Asp94. Residues 170–231 (GNKRKLTTPP…DSPMRSPGLA (62 aa)) form a disordered region. Positions 185 to 199 (SATSSMESSDSTVES) are enriched in low complexity. Positions 210–221 (LTMSPESATSLV) are enriched in polar residues.

The protein belongs to the ARR family. Type-A subfamily. Two-component system major event consists of a His-to-Asp phosphorelay between a sensor histidine kinase (HK) and a response regulator (RR). In plants, the His-to-Asp phosphorelay involves an additional intermediate named Histidine-containing phosphotransfer protein (HPt). This multistep phosphorelay consists of a His-Asp-His-Asp sequential transfer of a phosphate group between first a His and an Asp of the HK protein, followed by the transfer to a conserved His of the HPt protein and finally the transfer to an Asp in the receiver domain of the RR protein. Predominantly expressed in roots.

The protein resides in the nucleus. Functions as a response regulator involved in His-to-Asp phosphorelay signal transduction system. Phosphorylation of the Asp residue in the receiver domain activates the ability of the protein to promote the transcription of target genes. Type-A response regulators seem to act as negative regulators of the cytokinin signaling. In Arabidopsis thaliana (Mouse-ear cress), this protein is Two-component response regulator ARR3 (ARR3).